A 322-amino-acid chain; its full sequence is Epiphycan (322 aa).

The first 19 residues, 1-19, serve as a signal peptide directing secretion; sequence MKTLAGLVLGLVIFDAAVT. Threonine 60 is a glycosylation site (O-linked (GalNAc...) threonine). Serine 64 carries O-linked (Xyl...) (dermatan sulfate) serine glycosylation. Residues 64–101 are disordered; that stretch reads SGNRELLTPPPQPEKAQEEEEEEESTPRLIDGSSPQEP. O-linked (GalNAc...) serine glycosylation occurs at serine 96. Residues 106 to 143 form the LRRNT domain; it reads VLGPHTNEDFPTCLLCTCISTTVYCDDHELDAIPPLPK. Cysteine 118 and cysteine 130 are disulfide-bonded. LRR repeat units follow at residues 144-165, 168-189, 192-213, 238-258, and 259-280; these read NTAY…DFAS, DLKR…AFRK, QLRE…PTTL, DLHH…PLPE, and NLRA…TFCN. Residues cysteine 279 and cysteine 312 are joined by a disulfide bond. 2 N-linked (GlcNAc...) asparagine glycosylation sites follow: asparagine 283 and asparagine 302. The stretch at 290-310 is one LRR 6 repeat; it reads ALEDIRLDGNPINLSKTPQAY.

It belongs to the small leucine-rich proteoglycan (SLRP) family. SLRP class III subfamily. The O-linked polysaccharides on Thr-60 and Ser-96 are probably the mucin type linked to GalNAc. There is one glycosaminoglycan chain, known to be dermatan sulfate, and it is probably the O-glycosylation at Ser-64. In terms of tissue distribution, cartilage, ligament, and placenta.

Its subcellular location is the secreted. It localises to the extracellular space. The protein resides in the extracellular matrix. Functionally, may have a role in bone formation and also in establishing the ordered structure of cartilage through matrix organization. The polypeptide is Epiphycan (EPYC) (Homo sapiens (Human)).